The following is a 600-amino-acid chain: Oligopeptide-binding protein OppA (600 aa).

An N-terminal signal peptide occupies residues 1–22 (MKKLKVTLLASSVVLAAALLSA). A lipid anchor (N-palmitoyl cysteine) is attached at cysteine 23. Cysteine 23 is lipidated: S-diacylglycerol cysteine.

Belongs to the bacterial solute-binding protein 5 family. In terms of assembly, the complex is composed of two ATP-binding proteins (OppD and OppF), two transmembrane proteins (OppB and OppC) and a solute-binding protein (OppA).

The protein resides in the cell membrane. Functionally, part of the ABC transporter complex OppABCDF involved in the uptake of oligopeptides. The protein is Oligopeptide-binding protein OppA (oppA) of Lactococcus lactis subsp. lactis (strain IL1403) (Streptococcus lactis).